The primary structure comprises 81 residues: PKYTIVDKETCIACGACGAAAPDIYDYDEDGIAYVTLDDNQGIVEVPDILIDDMMDAFEGCPTESIKVADEPFDGDPNKFD.

The 29-residue stretch at 2–30 folds into the 4Fe-4S ferredoxin-type domain; that stretch reads KYTIVDKETCIACGACGAAAPDIYDYDED. Positions 11, 14, 17, and 61 each coordinate [4Fe-4S] cluster.

It depends on [4Fe-4S] cluster as a cofactor.

Functionally, ferredoxins are iron-sulfur proteins that transfer electrons in a wide variety of metabolic reactions. This is Ferredoxin (fer) from Geobacillus stearothermophilus (Bacillus stearothermophilus).